A 319-amino-acid polypeptide reads, in one-letter code: Guanosine ABC transporter permease protein NupQ (319 aa).

Helical transmembrane passes span 6–26, 39–59, 65–85, 99–119, 159–179, 204–224, 235–255, 257–277, and 282–302; these read ILSIIVPATLVYAAPLILTAL, IGLEGLMIIGAFTSVLFNLFF, AAAPWLSLLAAMAAGALFSLI, VSGVAINMLALGATLFIVKLI, ILAIALAFISWFILFKTPFGL, IGVMISGLFGGLGGGVYASTI, GQGFIALAALVFGKWHPIGAL, AALFFGFAQSLSIIGSLLPLF, and NVYMLMAPYILTILALTGFIG.

It belongs to the binding-protein-dependent transport system permease family. In terms of assembly, the complex is composed of two ATP-binding proteins (NupO), two transmembrane proteins (NupP and NupQ) and a solute-binding protein (NupN).

The protein localises to the cell membrane. Its function is as follows. Part of an ABC transporter complex involved in the uptake of guanosine. Responsible for the translocation of the substrate across the membrane. May be a nucleoside transporter of broad specificity but with various affinities for different substrates. This Bacillus subtilis (strain 168) protein is Guanosine ABC transporter permease protein NupQ.